Here is a 334-residue protein sequence, read N- to C-terminus: MIEADRLIQPQDLGQEDVIDRAMRPKLLDEYTGQDDTRAQLKVFIEAAKKRGEALDHMLIYGPPGLGKTTLANIVANEMGVNIKSTSGPVLEKAGDLAALLTNLEEGDVLFIDEIHRLSPVVEEILYPAMEDYQLDIMIGEGPAARSIKLDLPPFTLVGATTRAGSLTSPLRARFGIPLRLEFYNVRDLSSIVARSAKVMDVPMDEGGAEEIARRSRGTPRIANRLLRRVRDFAEVKHDGAISRAVAQSALDLLDVDSEGFDYMDRKLLLAIIDKFMGGPVGLDNLAAAIGEERETIEDVLEPFLIQQGFVQRTPRGRIATARAYSHFDLIKPD.

The large ATPase domain (RuvB-L) stretch occupies residues 4–184; that stretch reads ADRLIQPQDL…FGIPLRLEFY (181 aa). ATP-binding positions include Arg24, Gly65, Lys68, Thr69, Thr70, 131-133, Arg174, Tyr184, and Arg221; that span reads EDY. A Mg(2+)-binding site is contributed by Thr69. A small ATPAse domain (RuvB-S) region spans residues 185-255; that stretch reads NVRDLSSIVA…VAQSALDLLD (71 aa). Residues 258–334 form a head domain (RuvB-H) region; sequence SEGFDYMDRK…YSHFDLIKPD (77 aa). DNA-binding residues include Arg294, Arg313, and Arg318.

This sequence belongs to the RuvB family. Homohexamer. Forms an RuvA(8)-RuvB(12)-Holliday junction (HJ) complex. HJ DNA is sandwiched between 2 RuvA tetramers; dsDNA enters through RuvA and exits via RuvB. An RuvB hexamer assembles on each DNA strand where it exits the tetramer. Each RuvB hexamer is contacted by two RuvA subunits (via domain III) on 2 adjacent RuvB subunits; this complex drives branch migration. In the full resolvosome a probable DNA-RuvA(4)-RuvB(12)-RuvC(2) complex forms which resolves the HJ.

Its subcellular location is the cytoplasm. It catalyses the reaction ATP + H2O = ADP + phosphate + H(+). The RuvA-RuvB-RuvC complex processes Holliday junction (HJ) DNA during genetic recombination and DNA repair, while the RuvA-RuvB complex plays an important role in the rescue of blocked DNA replication forks via replication fork reversal (RFR). RuvA specifically binds to HJ cruciform DNA, conferring on it an open structure. The RuvB hexamer acts as an ATP-dependent pump, pulling dsDNA into and through the RuvAB complex. RuvB forms 2 homohexamers on either side of HJ DNA bound by 1 or 2 RuvA tetramers; 4 subunits per hexamer contact DNA at a time. Coordinated motions by a converter formed by DNA-disengaged RuvB subunits stimulates ATP hydrolysis and nucleotide exchange. Immobilization of the converter enables RuvB to convert the ATP-contained energy into a lever motion, pulling 2 nucleotides of DNA out of the RuvA tetramer per ATP hydrolyzed, thus driving DNA branch migration. The RuvB motors rotate together with the DNA substrate, which together with the progressing nucleotide cycle form the mechanistic basis for DNA recombination by continuous HJ branch migration. Branch migration allows RuvC to scan DNA until it finds its consensus sequence, where it cleaves and resolves cruciform DNA. The chain is Holliday junction branch migration complex subunit RuvB from Shewanella amazonensis (strain ATCC BAA-1098 / SB2B).